Here is a 395-residue protein sequence, read N- to C-terminus: MMAAKVVPMPPKPKQSFILRVPPDSKLGQDLLRDATNGPKTIHQLVLEHFLTFLPKPSLVQPSQKVKETLVIMKDVSSSLQNRVHPRPLVKLLPKGVQKEQETVSLYLKANPEELVVFEDLNVFHCQEECVSLDPTQQLTSEKEDDSSVGEMMLLAVNGSNPEGEDPEREPVENEDYREKSSDDDEMDSSLVSQQPPDNQEKERLNTSIPQKRKMRNLLVTIENDTPLEELSKYVDISIIALTRNRRTRRWYTCPLCGKQFNESSYLISHQRTHTGEKPYDCNHCGKSFNHKTNLNKHERIHTGEKPYSCSQCGKNFRQNSHRSRHEGIHIREKIFKCPECGKTFPKNEEFVLHLQSHEAERPYGCKKCGRRFGRLSNCTRHEKTHSACKTRKQK.

The tract at residues Val-157 to Ser-208 is disordered. Residues Arg-169–Ser-181 are compositionally biased toward basic and acidic residues. Residues Arg-246–Lys-395 are interaction with PRMT3. 5 consecutive C2H2-type zinc fingers follow at residues Tyr-252–His-274, Tyr-280–His-302, Tyr-308–His-330, Phe-336–His-358, and Tyr-364–His-386.

Interacts (via C-terminus) with PRMT3 (via zinc-finger); the interaction is direct and required to localize protein arginine N-methyltransferase PRMT3 to the nucleus and inhibit its proteasomal degradation. Highly expressed in testis, weakly expressed in spleen, thymus, prostate, ovary, small intestine colon and peripheral blood leukocytes.

The protein localises to the nucleus. Localizes protein arginine N-methyltransferase PRMT3 to the nucleus. This Homo sapiens (Human) protein is Zinc finger protein 200 (ZNF200).